The chain runs to 179 residues: Large ribosomal subunit protein uL5 (179 aa).

It belongs to the universal ribosomal protein uL5 family. Part of the 50S ribosomal subunit; part of the 5S rRNA/L5/L18/L25 subcomplex. Contacts the 5S rRNA and the P site tRNA. Forms a bridge to the 30S subunit in the 70S ribosome.

Its function is as follows. This is one of the proteins that bind and probably mediate the attachment of the 5S RNA into the large ribosomal subunit, where it forms part of the central protuberance. In the 70S ribosome it contacts protein S13 of the 30S subunit (bridge B1b), connecting the 2 subunits; this bridge is implicated in subunit movement. Contacts the P site tRNA; the 5S rRNA and some of its associated proteins might help stabilize positioning of ribosome-bound tRNAs. The protein is Large ribosomal subunit protein uL5 of Lachnoclostridium phytofermentans (strain ATCC 700394 / DSM 18823 / ISDg) (Clostridium phytofermentans).